The following is a 309-amino-acid chain: WD repeat domain phosphoinositide-interacting protein 4 (309 aa).

A WD 1 repeat occupies 4-42 (QPLRGVTSLHFNQDQSCFCCAMETGVRIYNVEPLMEKGH). A L/FRRG motif motif is present at residues 180 to 183 (LRRG). One copy of the WD 2 repeat lies at 184–223 (TDPATLYCINFSHDSSFLCASSDKGTVHIFALKDTRLNRR).

It belongs to the WD repeat PROPPIN family. In terms of assembly, interacts with WIPI1. Interacts with WIPI2. Interacts with ATG2A and ATG2B. Interacts with ULK1. May interact with the PRKAA1, PRKAA2, PRKAB1 and PRKAG1 subunits of the AMPK kinase. May interact with NUDC.

The protein localises to the preautophagosomal structure. It localises to the cytoplasm. Component of the autophagy machinery that controls the major intracellular degradation process by which cytoplasmic materials are packaged into autophagosomes and delivered to lysosomes for degradation. Binds phosphatidylinositol 3-phosphate (PtdIns3P). Activated by the STK11/AMPK signaling pathway upon starvation, WDR45 is involved in autophagosome assembly downstream of WIPI2, regulating the size of forming autophagosomes. Together with WIPI1, promotes ATG2 (ATG2A or ATG2B)-mediated lipid transfer by enhancing ATG2-association with phosphatidylinositol 3-monophosphate (PI3P)-containing membranes. Probably recruited to membranes through its PtdIns3P activity. In Rattus norvegicus (Rat), this protein is WD repeat domain phosphoinositide-interacting protein 4 (Wdr45).